The chain runs to 466 residues: Argininosuccinate lyase (466 aa).

This sequence belongs to the lyase 1 family. Argininosuccinate lyase subfamily.

The protein localises to the cytoplasm. It catalyses the reaction 2-(N(omega)-L-arginino)succinate = fumarate + L-arginine. The protein operates within amino-acid biosynthesis; L-arginine biosynthesis; L-arginine from L-ornithine and carbamoyl phosphate: step 3/3. The sequence is that of Argininosuccinate lyase from Synechococcus sp. (strain ATCC 27144 / PCC 6301 / SAUG 1402/1) (Anacystis nidulans).